A 213-amino-acid chain; its full sequence is Ribosomal RNA small subunit methyltransferase G (213 aa).

S-adenosyl-L-methionine is bound by residues Gly75, Phe80, 128–129 (IE), and Arg144.

The protein belongs to the methyltransferase superfamily. RNA methyltransferase RsmG family.

It localises to the cytoplasm. It catalyses the reaction guanosine(527) in 16S rRNA + S-adenosyl-L-methionine = N(7)-methylguanosine(527) in 16S rRNA + S-adenosyl-L-homocysteine. Specifically methylates the N7 position of guanine in position 527 of 16S rRNA. The chain is Ribosomal RNA small subunit methyltransferase G from Brucella anthropi (strain ATCC 49188 / DSM 6882 / CCUG 24695 / JCM 21032 / LMG 3331 / NBRC 15819 / NCTC 12168 / Alc 37) (Ochrobactrum anthropi).